Reading from the N-terminus, the 417-residue chain is Voltage-gated ClC-type chloride channel ClcB (417 aa).

Transmembrane regions (helical) follow at residues 5–25 (LLIA…FRHA), 54–74 (LITP…WQKM), 146–166 (LWIA…PLAG), 168–188 (LFIA…PVVV), 222–242 (VMIV…MWLM), 258–278 (WQLA…PTVW), 288–308 (FLLS…KILA), 316–336 (GAPG…GMFL), 349–371 (EIAI…HAPI), and 380–400 (MTGE…ASVL).

This sequence belongs to the chloride channel (TC 2.A.49) family. ClcB subfamily.

It is found in the cell inner membrane. In terms of biological role, probably acts as an electrical shunt for an outwardly-directed proton pump that is linked to amino acid decarboxylation, as part of the extreme acid resistance (XAR) response. The sequence is that of Voltage-gated ClC-type chloride channel ClcB from Salmonella dublin (strain CT_02021853).